Consider the following 624-residue polypeptide: Coagulation factor XI (624 aa).

The first 18 residues, 1–18 (MTSLHQVLYFIFFASVSS), serve as a signal peptide directing secretion. 4 consecutive Apple domains span residues 20-103 (CVTK…FKQC), 110-193 (CSKD…LKSC), 200-283 (CIRD…LQHC), and 291-376 (CHPS…LRLC). 17 disulfides stabilise this stretch: cysteine 20-cysteine 103, cysteine 46-cysteine 76, cysteine 50-cysteine 56, cysteine 110-cysteine 193, cysteine 136-cysteine 165, cysteine 140-cysteine 146, cysteine 200-cysteine 283, cysteine 226-cysteine 255, cysteine 230-cysteine 236, cysteine 291-cysteine 376, cysteine 317-cysteine 348, cysteine 321-cysteine 327, cysteine 382-cysteine 499, cysteine 415-cysteine 431, cysteine 513-cysteine 580, cysteine 544-cysteine 559, and cysteine 570-cysteine 598. Residues asparagine 90 and asparagine 126 are each glycosylated (N-linked (GlcNAc...) asparagine). A glycan (N-linked (GlcNAc...) asparagine) is linked at asparagine 297. Residues 390–622 (VVGGAASVHG…YVDWILEKTQ (233 aa)) enclose the Peptidase S1 domain. The active-site Charge relay system is histidine 430. Asparagine 449 carries an N-linked (GlcNAc...) asparagine glycan. The active-site Charge relay system is the aspartate 479. N-linked (GlcNAc...) asparagine glycosylation is present at asparagine 490. Residue 547–550 (RYRR) coordinates heparin. Serine 574 functions as the Charge relay system in the catalytic mechanism.

Belongs to the peptidase S1 family. Plasma kallikrein subfamily. In terms of assembly, homodimer; disulfide-linked. After activation the heavy and light chains are also linked by a disulfide bond. Interacts (activated) with F9 (inactive and activated) in calcium-dependent manner. Forms a heterodimer with SERPINA5. Post-translationally, activated by factor XIIa (or XII), which cleaves each polypeptide after Arg-389 into the light chain, which contains the active site, and the heavy chain, which associates with high molecular weight (HMW) kininogen. Activated by F12 (activated); the presence of negatively charged surfaces accelerates activation. Activated by F2 (thrombin); the presence of negatively charged surfaces, such as polyphosphate and dextran sulfate, strongly accelerates activation. Autoactivated; the presence of negatively charged surfaces, such as polyphosphate and dextran sulfate, accelerates autoactivation and autolysis. N-glycosylated on both chains. N-glycosylated sites mainly consist of nonfucosylated sialylated biantennary (in high abundance) and/or triantennary (in low abundance) complex structures.

The protein resides in the secreted. The enzyme catalyses Selective cleavage of Arg-|-Ala and Arg-|-Val bonds in factor IX to form factor IXa.. Its activity is regulated as follows. Inhibited by SERPINA5. Factor XI triggers the middle phase of the intrinsic pathway of blood coagulation by activating factor IX. In Mus musculus (Mouse), this protein is Coagulation factor XI (F11).